A 337-amino-acid chain; its full sequence is Glyceraldehyde-3-phosphate dehydrogenase (337 aa).

NAD(+) contacts are provided by residues 13-14, Asp-35, and Arg-80; that span reads RI. Residues 151–153, Thr-182, 211–212, and Arg-234 contribute to the D-glyceraldehyde 3-phosphate site; these read SCT and TG. Residue Cys-152 is the Nucleophile of the active site. Asn-316 contributes to the NAD(+) binding site.

It belongs to the glyceraldehyde-3-phosphate dehydrogenase family. Homotetramer.

The protein localises to the cytoplasm. The enzyme catalyses D-glyceraldehyde 3-phosphate + phosphate + NAD(+) = (2R)-3-phospho-glyceroyl phosphate + NADH + H(+). It participates in carbohydrate degradation; glycolysis; pyruvate from D-glyceraldehyde 3-phosphate: step 1/5. The polypeptide is Glyceraldehyde-3-phosphate dehydrogenase (GPD1) (Monascus purpureus (Red mold)).